The primary structure comprises 1347 residues: Spermatogenesis-associated protein 31A1 (1347 aa).

A helical transmembrane segment spans residues 23-43 (PWVLDIFLTLVFALGFFFLLL). 6 disordered regions span residues 55–89 (PSPS…ECPR), 106–235 (GPHL…STLI), 373–397 (EQDT…GPQK), 628–658 (DESP…EAQK), 899–955 (PRGI…REAV), and 1085–1160 (HEEP…PPSV). The segment covering 60 to 82 (GKRKCPVGRRRRPRGRMKNHSLR) has biased composition (basic residues). The span at 165–178 (LASTPSPGPMTTSV) shows a compositional bias: polar residues. A compositionally biased stretch (pro residues) spans 198 to 222 (PEPPALFPHPPHTPDPLACSPPPPK). Composition is skewed to polar residues over residues 631-651 (PGTS…STGE) and 927-948 (LTYS…SSKA). Basic and acidic residues-rich tracts occupy residues 1108 to 1127 (HKSE…RLEG) and 1137 to 1146 (RKTEDTHQDE).

The protein belongs to the SPATA31 family.

It localises to the membrane. Its function is as follows. May play a role in spermatogenesis. This chain is Spermatogenesis-associated protein 31A1, found in Homo sapiens (Human).